An 89-amino-acid chain; its full sequence is Pigment dispersing factor homolog pdf-2 (89 aa).

The first 27 residues, 1–27 (MSSRISVSLLLLAVVATMFFTANVVDA), serve as a signal peptide directing secretion.

Functionally, probable ligand of isoforms a and b of the calcitonin receptor-like protein, pdfr-1, a G-protein coupled receptor. May not signal through isoform c of pdfr-1. Involved in locomotion; may play a role in circadian rhythms of locomotor activity. Modulator of egg-laying. This is Pigment dispersing factor homolog pdf-2 from Caenorhabditis elegans.